The chain runs to 114 residues: QVGYSGIVSPDGNNIQFTHDFAHSIVLKGPSGIVTSDGKNLQLTAGQASLQAAAPAPPLPVSHYVASQQSVVGPSGIVSPSGNVQFSHEFADNVVLVGPSGIVTKDGNNLQLRA.

Glutamine 1 bears the Pyrrolidone carboxylic acid mark. Tandem repeats lie at residues 1-17 (QVGYSGIVSPDGNNIQF), 26-43 (VLKGPSGIVTSDGKNLQL), 70-87 (SVVGPSGIVSPSGNVQFS), and 95-112 (VLVGPSGIVTKDGNNLQL).

Calcified shell.

The chain is Cuticle protein CP1158 from Cancer pagurus (Rock crab).